The chain runs to 93 residues: YcgL domain-containing protein Swoo_2115 (93 aa).

A YcgL domain is found at 1 to 85; that stretch reads MICAVYKSRR…PVVNLLEEHK (85 aa).

This is YcgL domain-containing protein Swoo_2115 from Shewanella woodyi (strain ATCC 51908 / MS32).